Reading from the N-terminus, the 162-residue chain is Peptide methionine sulfoxide reductase MsrA (162 aa).

Cysteine 16 is a catalytic residue.

It belongs to the MsrA Met sulfoxide reductase family.

The enzyme catalyses L-methionyl-[protein] + [thioredoxin]-disulfide + H2O = L-methionyl-(S)-S-oxide-[protein] + [thioredoxin]-dithiol. The catalysed reaction is [thioredoxin]-disulfide + L-methionine + H2O = L-methionine (S)-S-oxide + [thioredoxin]-dithiol. Its function is as follows. Has an important function as a repair enzyme for proteins that have been inactivated by oxidation. Catalyzes the reversible oxidation-reduction of methionine sulfoxide in proteins to methionine. The protein is Peptide methionine sulfoxide reductase MsrA of Geobacter metallireducens (strain ATCC 53774 / DSM 7210 / GS-15).